Here is a 176-residue protein sequence, read N- to C-terminus: METQRASLSLGRCSLWLLLLGLVLPSASAQALSYREAVLRAVDQFNERSSEANLYRLLELDPTPNDDLDPGTRKPVSFRVKETDCPRTSQQPLEQCDFKENGLVKQCVGTVTLDPSNDQFDINCNELQSVRFRPPIRRPPIRPPFYPPFRPPIRPPIFPPIRPPFRPPLGPFPGRR.

An N-terminal signal peptide occupies residues 1–29; sequence METQRASLSLGRCSLWLLLLGLVLPSASA. Pyrrolidone carboxylic acid is present on Q30. A propeptide spanning residues 30-130 is cleaved from the precursor; the sequence is QALSYREAVL…DINCNELQSV (101 aa). 2 cysteine pairs are disulfide-bonded: C85-C96 and C107-C124. The segment at 157–176 is disordered; it reads IFPPIRPPFRPPLGPFPGRR. P173 carries the proline amide modification. Positions 174–176 are cleaved as a propeptide — removed in mature form; it reads GRR.

The protein belongs to the cathelicidin family. In terms of processing, elastase is responsible for its maturation. As to expression, large granules of neutrophils.

It is found in the secreted. Its function is as follows. Exerts, in vitro, a potent antimicrobial activity. Probably due to an impairment of the function of the respiratory chain and of energy-dependent activities in the inner membrane of susceptible microorganisms. The sequence is that of Cathelicidin-2 (CATHL2) from Bos taurus (Bovine).